A 32-amino-acid polypeptide reads, in one-letter code: Photosystem II reaction center protein T (32 aa).

Residues 3–23 (ALVYTFLLIGTLMVIFFAVFF) form a helical membrane-spanning segment.

It belongs to the PsbT family. PSII is composed of 1 copy each of membrane proteins PsbA, PsbB, PsbC, PsbD, PsbE, PsbF, PsbH, PsbI, PsbJ, PsbK, PsbL, PsbM, PsbT, PsbX, PsbY, PsbZ, Psb30/Ycf12, at least 3 peripheral proteins of the oxygen-evolving complex and a large number of cofactors. It forms dimeric complexes.

It localises to the plastid. Its subcellular location is the chloroplast thylakoid membrane. Functionally, found at the monomer-monomer interface of the photosystem II (PS II) dimer, plays a role in assembly and dimerization of PSII. PSII is a light-driven water plastoquinone oxidoreductase, using light energy to abstract electrons from H(2)O, generating a proton gradient subsequently used for ATP formation. The protein is Photosystem II reaction center protein T of Trieres chinensis (Marine centric diatom).